Consider the following 555-residue polypeptide: Glucose-6-phosphate isomerase (555 aa).

D-glucose 6-phosphate contacts are provided by residues 169-170 (GS), 219-224 (SKTFTT), Q364, E368, H399, and K521. E368 (proton donor) is an active-site residue. Active-site residues include H399 and K521.

This sequence belongs to the GPI family. As to quaternary structure, homodimer.

The protein resides in the cytoplasm. It localises to the cytosol. It catalyses the reaction alpha-D-glucose 6-phosphate = beta-D-fructose 6-phosphate. The protein operates within carbohydrate degradation; glycolysis; D-glyceraldehyde 3-phosphate and glycerone phosphate from D-glucose: step 2/4. Its function is as follows. In the cytoplasm, catalyzes the conversion of glucose-6-phosphate to fructose-6-phosphate, the second step in glycolysis, and the reverse reaction during gluconeogenesis. This Kluyveromyces lactis (strain ATCC 8585 / CBS 2359 / DSM 70799 / NBRC 1267 / NRRL Y-1140 / WM37) (Yeast) protein is Glucose-6-phosphate isomerase (RAG2).